Reading from the N-terminus, the 410-residue chain is Multifunctional CCA protein (410 aa).

The ATP site is built by Gly8 and Arg11. Gly8 and Arg11 together coordinate CTP. Asp21 and Asp23 together coordinate Mg(2+). Residues Arg91, Arg138, and Arg141 each coordinate ATP. CTP is bound by residues Arg91, Arg138, and Arg141. Positions Thr229–Asp347 constitute an HD domain.

Belongs to the tRNA nucleotidyltransferase/poly(A) polymerase family. Bacterial CCA-adding enzyme type 1 subfamily. In terms of assembly, monomer. Can also form homodimers and oligomers. Mg(2+) is required as a cofactor. The cofactor is Ni(2+).

The catalysed reaction is a tRNA precursor + 2 CTP + ATP = a tRNA with a 3' CCA end + 3 diphosphate. It carries out the reaction a tRNA with a 3' CCA end + 2 CTP + ATP = a tRNA with a 3' CCACCA end + 3 diphosphate. Its function is as follows. Catalyzes the addition and repair of the essential 3'-terminal CCA sequence in tRNAs without using a nucleic acid template. Adds these three nucleotides in the order of C, C, and A to the tRNA nucleotide-73, using CTP and ATP as substrates and producing inorganic pyrophosphate. tRNA 3'-terminal CCA addition is required both for tRNA processing and repair. Also involved in tRNA surveillance by mediating tandem CCA addition to generate a CCACCA at the 3' terminus of unstable tRNAs. While stable tRNAs receive only 3'-terminal CCA, unstable tRNAs are marked with CCACCA and rapidly degraded. The protein is Multifunctional CCA protein of Xanthomonas euvesicatoria pv. vesicatoria (strain 85-10) (Xanthomonas campestris pv. vesicatoria).